Here is a 272-residue protein sequence, read N- to C-terminus: MSTYAIGDLQGCHAEFEALLERIAFEPRRDRLWLVGDLVNRGPGSLACLRAVKALGDSARVVLGNHDLHLLAAAWAGAPLKRSDTLAPILEADDRDELLDWLRRQPLLVRDDELDAVMTHAGLPPHWSVTQAAEHAAEVERALRGEAVGDFLAAMYGNSPARWTDELEGIDRLRVIVNTFTRMRFIAADGTLDFAAKEGLDSAPEGFAPWFTYARDDDPRIVFGHWAALQGATPGARVRALALDTGCVWGGALTALDLVSGEYHVEPAHASR.

It belongs to the Ap4A hydrolase family.

The enzyme catalyses P(1),P(4)-bis(5'-adenosyl) tetraphosphate + H2O = 2 ADP + 2 H(+). Hydrolyzes diadenosine 5',5'''-P1,P4-tetraphosphate to yield ADP. The chain is Bis(5'-nucleosyl)-tetraphosphatase, symmetrical from Chromohalobacter salexigens (strain ATCC BAA-138 / DSM 3043 / CIP 106854 / NCIMB 13768 / 1H11).